The sequence spans 23 residues: Alyteserin-1c (23 aa).

At Ser-23 the chain carries Serine amide.

As to expression, expressed by the skin glands.

Its subcellular location is the secreted. The protein resides in the target cell membrane. Antibacterial peptide with amphipathic alpha-helical structure that shows selective growth-inhibitory activity against Gram-negative bacteria but low hemolytic activity against human erythrocytes (LC(50)=145-220 uM). It is moderately active against the Gram-negative bacteria E.coli (MIC=25 uM), K.pneumoniae (MIC=50 uM), P.aeruginosa (MIC=25 uM), A.baumannii (MIC=6 uM), and is weaky active against the Gram-positive S.aureus (MIC=100-250 uM). The sequence is that of Alyteserin-1c from Alytes obstetricans (Common midwife toad).